The primary structure comprises 129 residues: MNSSTALMCFALLLISPLCLGYSDEDREADSRRIAEIIQNAQDDDSKINSTQELLDIYRRLYPTLSLEDRENIDKFVNEHTDAIVIDGVPIQGGRKAKIIGKIVSPAAKGLAVGFFEELGSKIAQLFTG.

A signal peptide spans 1–21 (MNSSTALMCFALLLISPLCLG). N-linked (GlcNAc...) asparagine glycosylation occurs at Asn49.

It belongs to the Turandot family.

It localises to the secreted. In terms of biological role, a humoral factor that plays a role in stress tolerance; gives increased resistance to the lethal effects of bacterial challenge and stress. Regulated by the JAK/STAT pathway and NF-KB-like Relish pathway in the fat body, upd3 in the hemocytes and Mekk1 in response to septic injury and consequent immune response. This chain is Protein Turandot A1/2 (TotA1), found in Drosophila sechellia (Fruit fly).